Reading from the N-terminus, the 456-residue chain is RUN domain-containing protein 3B (456 aa).

The segment at 1 to 24 (MASRSLGGLSGIRGGGGGGGKKSL) is disordered. Gly residues predominate over residues 8 to 21 (GLSGIRGGGGGGGK). R13 carries the omega-N-methylarginine modification. In terms of domain architecture, RUN spans 57 to 189 (DDSSPEFNNF…IDFSFCLKGE (133 aa)). S215 and S216 each carry phosphoserine. A disordered region spans residues 216 to 237 (SDEEELRTLGSSGSESSTPENV). The segment covering 224-235 (LGSSGSESSTPE) has biased composition (polar residues). Residues 300-325 (AHKLEKEQLEYIIVELQDQLTVLKNN) are a coiled coil. Over residues 382 to 405 (SLSQTSLDPGQSQEGDGKQDTLNV) the composition is skewed to polar residues. The segment at 382 to 411 (SLSQTSLDPGQSQEGDGKQDTLNVMSEGKE) is disordered.

The protein belongs to the RUNDC3 family. As to quaternary structure, interacts with RAP2A.

This Pongo abelii (Sumatran orangutan) protein is RUN domain-containing protein 3B (RUNDC3B).